A 78-amino-acid chain; its full sequence is Metallothionein-like protein type 2 (78 aa).

Belongs to the metallothionein superfamily. Type 15 family.

In terms of biological role, metallothioneins have a high content of cysteine residues that bind various heavy metals. The sequence is that of Metallothionein-like protein type 2 from Actinidia deliciosa (Kiwi).